Consider the following 238-residue polypeptide: Transmembrane protein 127 (238 aa).

Met-1 carries the post-translational modification N-acetylmethionine. Residues 1–11 are compositionally biased toward gly residues; that stretch reads MYAPGGAGLPG. Residues 1 to 27 form a disordered region; it reads MYAPGGAGLPGGRRRRSPGGSALPKQP. Ser-17 is modified (phosphoserine). Helical transmembrane passes span 96–116, 130–150, and 169–189; these read IAAF…LDVF, AFAH…SYWA, and VYVT…ASIL.

This sequence belongs to the TMEM127 family. As to expression, widely expressed.

Its subcellular location is the cell membrane. It localises to the cytoplasm. In terms of biological role, controls cell proliferation acting as a negative regulator of TOR signaling pathway mediated by mTORC1. May act as a tumor suppressor. The sequence is that of Transmembrane protein 127 (TMEM127) from Homo sapiens (Human).